Here is an 800-residue protein sequence, read N- to C-terminus: Probable inorganic carbon transporter subunit DabA (800 aa).

The Zn(2+) site is built by C329, D331, H488, and C503.

It belongs to the inorganic carbon transporter (TC 9.A.2) DabA family. Forms a complex with DabB. Requires Zn(2+) as cofactor.

It localises to the cell inner membrane. Its function is as follows. Part of an energy-coupled inorganic carbon pump. This Roseobacter denitrificans (strain ATCC 33942 / OCh 114) (Erythrobacter sp. (strain OCh 114)) protein is Probable inorganic carbon transporter subunit DabA.